The chain runs to 1505 residues: Myosin-6 (1505 aa).

Positions 8–57 constitute a Myosin N-terminal SH3-like domain; sequence SVGSFVWVEDPDEAWIDGEVVQVNGDEIKVLCTSGKHVVTKISNAYPKDV. Residues 62-731 form the Myosin motor domain; it reads SGVDDMTRLA…QMADLDTRRT (670 aa). ATP-binding positions include 156 to 163 and 209 to 217; these read GESGAGKT and NNNSSRFGK. Actin-binding stretches follow at residues 495-529, 531-554, 589-612, and 612-634; these read LIEK…YQTF, THKR…AGDV, FPPM…KQQL, and LVSL…KPNN. IQ domains are found at residues 734–763, 757–786, 782–811, 805–834, 830–859, and 853–882; these read LGRS…SAKQ, LRNS…EAAA, REAA…AAVS, LYSA…TKAA, QTKA…AAIT, and LKKA…AARE. Positions 883 to 1048 form a coiled coil; that stretch reads TGALQAAKNK…AEKKIMHQQT (166 aa). One can recognise a Dilute domain in the interval 1148–1452; that stretch reads DRLIQMIGSA…ISSMRTLMTE (305 aa).

Belongs to the TRAFAC class myosin-kinesin ATPase superfamily. Myosin family. Plant myosin class XI subfamily. In terms of assembly, homodimer. Interacts with RABC2A and RABD1. In terms of tissue distribution, expressed in flowers, leaves, roots and stems.

The protein localises to the cytoplasm. Myosin heavy chain that is required for the cell cycle-regulated transport of various organelles and proteins for their segregation. Functions by binding with its tail domain to receptor proteins on organelles and exerting force with its N-terminal motor domain against actin filaments, thereby transporting its cargo along polarized actin cables. Involved in the tip growth of root hair cells. Plays a major role in trafficking of Golgi stacks, mitochondria and peroxisomes during root hair development. Targets the peroxisome through an interaction with RABC2A. Required for development of pavement cells, trichomes, and stigmatic papillae. The chain is Myosin-6 (XI-2) from Arabidopsis thaliana (Mouse-ear cress).